The sequence spans 207 residues: dTTP/UTP pyrophosphatase (207 aa).

The Proton acceptor role is filled by Asp-87.

This sequence belongs to the Maf family. YhdE subfamily. Requires a divalent metal cation as cofactor.

The protein localises to the cytoplasm. The catalysed reaction is dTTP + H2O = dTMP + diphosphate + H(+). It catalyses the reaction UTP + H2O = UMP + diphosphate + H(+). Its function is as follows. Nucleoside triphosphate pyrophosphatase that hydrolyzes dTTP and UTP. May have a dual role in cell division arrest and in preventing the incorporation of modified nucleotides into cellular nucleic acids. The chain is dTTP/UTP pyrophosphatase from Bordetella pertussis (strain Tohama I / ATCC BAA-589 / NCTC 13251).